Here is a 223-residue protein sequence, read N- to C-terminus: Uracil-DNA glycosylase (223 aa).

The active-site Proton acceptor is the Asp61.

This sequence belongs to the uracil-DNA glycosylase (UDG) superfamily. UNG family.

The protein resides in the cytoplasm. The catalysed reaction is Hydrolyzes single-stranded DNA or mismatched double-stranded DNA and polynucleotides, releasing free uracil.. Its function is as follows. Excises uracil residues from the DNA which can arise as a result of misincorporation of dUMP residues by DNA polymerase or due to deamination of cytosine. The polypeptide is Uracil-DNA glycosylase (Histophilus somni (strain 129Pt) (Haemophilus somnus)).